A 363-amino-acid polypeptide reads, in one-letter code: Type-1 angiotensin II receptor B (363 aa).

Residues 1 to 27 (MLSNISAGENSEVEKIVVKCSKSGMHN) lie on the Extracellular side of the membrane. The N-linked (GlcNAc...) asparagine glycan is linked to N4. 2 cysteine pairs are disulfide-bonded: C20–C274 and C103–C182. A helical transmembrane segment spans residues 28-57 (YIFITIPIIYSTIFVVGVFGNSLVVIVIYS). Residues 58 to 63 (YMKMKT) are Cytoplasmic-facing. The chain crosses the membrane as a helical span at residues 64 to 91 (MASVFLMNLALSDLCFVITLPLWAVYTA). Over 92 to 100 (MHYHWPFGD) the chain is Extracellular. Residues 101–127 (LLCKIASTAITLNLYTTVFLLTCLSID) traverse the membrane as a helical segment. At 128-143 (RYSAIVHPMKSRIRRT) the chain is on the cytoplasmic side. The chain crosses the membrane as a helical span at residues 144–167 (VMVARLTCVGIWLVAFLASLPSVI). The Extracellular segment spans residues 168–192 (YRQIFIFPDTNQTVCALVYHSGHIY). R169 is a binding site for angiotensin II. N-linked (GlcNAc...) asparagine glycosylation occurs at N178. Positions 186 and 201 each coordinate angiotensin II. A helical transmembrane segment spans residues 193–218 (FMVGMSLVKNIVGFFIPFVIILTSYT). The Cytoplasmic segment spans residues 219-239 (LIGKTLKEVYRAQRARNDDIF). A helical transmembrane segment spans residues 240–268 (KMIVAVVLLFFFCWIPHQVFTFLDVLIQM). The Extracellular portion of the chain corresponds to 269-278 (DVIQNCKMYD). Residues 279-304 (IVDTGMPITICIAYFNSCLNPFLYGF) traverse the membrane as a helical segment. Residues 305 to 363 (FGKKFRKHFLQLIKYIPPKMRTHASVNTKSSTVSQRLSDTKCASNKIALWIFDIEEHCK) lie on the Cytoplasmic side of the membrane. S-palmitoyl cysteine attachment occurs at residues C346 and C362.

The protein belongs to the G-protein coupled receptor 1 family. C-terminal Ser or Thr residues may be phosphorylated. As to expression, heart membranes, follicular oocytes.

The protein resides in the cell membrane. Its function is as follows. Receptor for angiotensin II, a vasoconstricting peptide, which acts as a key regulator of blood pressure and sodium retention by the kidney. The activated receptor in turn couples to G-alpha proteins G(q) (GNAQ, GNA11, GNA14 or GNA15) and thus activates phospholipase C and increases the cytosolic Ca(2+) concentrations, which in turn triggers cellular responses such as stimulation of protein kinase C. The protein is Type-1 angiotensin II receptor B (agtr1-b) of Xenopus laevis (African clawed frog).